The following is a 316-amino-acid chain: Homoserine O-succinyltransferase (316 aa).

Cys-142 functions as the Acyl-thioester intermediate in the catalytic mechanism. Lys-163 and Ser-192 together coordinate substrate. The active-site Proton acceptor is the His-235. Glu-237 is a catalytic residue. Arg-249 contributes to the substrate binding site.

Belongs to the MetA family.

It is found in the cytoplasm. The enzyme catalyses L-homoserine + succinyl-CoA = O-succinyl-L-homoserine + CoA. It functions in the pathway amino-acid biosynthesis; L-methionine biosynthesis via de novo pathway; O-succinyl-L-homoserine from L-homoserine: step 1/1. In terms of biological role, transfers a succinyl group from succinyl-CoA to L-homoserine, forming succinyl-L-homoserine. The sequence is that of Homoserine O-succinyltransferase from Shewanella amazonensis (strain ATCC BAA-1098 / SB2B).